The chain runs to 138 residues: Cysteine desulfuration protein SufE (138 aa).

Catalysis depends on C51, which acts as the Cysteine persulfide intermediate.

Belongs to the SufE family. In terms of assembly, homodimer. Interacts with SufS.

It is found in the cytoplasm. The protein operates within cofactor biosynthesis; iron-sulfur cluster biosynthesis. Functionally, participates in cysteine desulfuration mediated by SufS. Cysteine desulfuration mobilizes sulfur from L-cysteine to yield L-alanine and constitutes an essential step in sulfur metabolism for biosynthesis of a variety of sulfur-containing biomolecules. Functions as a sulfur acceptor for SufS, by mediating the direct transfer of the sulfur atom from the S-sulfanylcysteine of SufS, an intermediate product of cysteine desulfuration process. The sequence is that of Cysteine desulfuration protein SufE from Shigella flexneri serotype 5b (strain 8401).